Reading from the N-terminus, the 196-residue chain is Imidazole glycerol phosphate synthase subunit HisH (196 aa).

The Glutamine amidotransferase type-1 domain maps to 2–196 (NVVILDTGCA…AQLLKNFLEM (195 aa)). Cys-77 acts as the Nucleophile in catalysis. Residues His-178 and Glu-180 contribute to the active site.

Heterodimer of HisH and HisF.

Its subcellular location is the cytoplasm. It catalyses the reaction 5-[(5-phospho-1-deoxy-D-ribulos-1-ylimino)methylamino]-1-(5-phospho-beta-D-ribosyl)imidazole-4-carboxamide + L-glutamine = D-erythro-1-(imidazol-4-yl)glycerol 3-phosphate + 5-amino-1-(5-phospho-beta-D-ribosyl)imidazole-4-carboxamide + L-glutamate + H(+). It carries out the reaction L-glutamine + H2O = L-glutamate + NH4(+). It functions in the pathway amino-acid biosynthesis; L-histidine biosynthesis; L-histidine from 5-phospho-alpha-D-ribose 1-diphosphate: step 5/9. Its function is as follows. IGPS catalyzes the conversion of PRFAR and glutamine to IGP, AICAR and glutamate. The HisH subunit catalyzes the hydrolysis of glutamine to glutamate and ammonia as part of the synthesis of IGP and AICAR. The resulting ammonia molecule is channeled to the active site of HisF. The protein is Imidazole glycerol phosphate synthase subunit HisH of Salmonella choleraesuis (strain SC-B67).